The sequence spans 182 residues: Peptide deformylase (182 aa).

Residues Cys-100 and His-142 each contribute to the Fe cation site. The active site involves Glu-143. His-146 serves as a coordination point for Fe cation.

Belongs to the polypeptide deformylase family. It depends on Fe(2+) as a cofactor.

The enzyme catalyses N-terminal N-formyl-L-methionyl-[peptide] + H2O = N-terminal L-methionyl-[peptide] + formate. Functionally, removes the formyl group from the N-terminal Met of newly synthesized proteins. Requires at least a dipeptide for an efficient rate of reaction. N-terminal L-methionine is a prerequisite for activity but the enzyme has broad specificity at other positions. The protein is Peptide deformylase of Bartonella bacilliformis (strain ATCC 35685 / KC583 / Herrer 020/F12,63).